A 55-amino-acid chain; its full sequence is Large ribosomal subunit protein bL33 (55 aa).

It belongs to the bacterial ribosomal protein bL33 family.

The protein is Large ribosomal subunit protein bL33 of Escherichia coli (strain K12 / DH10B).